The chain runs to 336 residues: MAVIYYDKDADLNLIKDKKIAIIGYGSQGHAHALNLKDSGLNVVVGLREGSKSWKKAEEQGLTVKTIEEAAKEADIIMILIPDEHQPEIYKKYIEKHLTEGKMLMFAHGFNIHYHQIIPPKNVDVTMIAPKSPGHIVRREYVEGRGVPALVAVYQDYTGKAKDIALAYAKGIGVTRAGVIETTFKEETETDLFGEQAVLCGGVTALIKAGFETLVDAGYQPEIAYFECLNELKLIVDLIYEGGLSFMRYSVSNTAEYGDYISQEKIVTKEVRENMKQMLKDIQTGKFAKDWILENQAGRPYFYTMRKKESEHLIEKVGKELRKMMPWLKERNVDEE.

One can recognise a KARI N-terminal Rossmann domain in the interval 1–182 (MAVIYYDKDA…GVTRAGVIET (182 aa)). NADP(+) contacts are provided by residues 25 to 28 (YGSQ), R48, S51, S53, and 83 to 86 (DEHQ). The active site involves H108. G134 lines the NADP(+) pocket. The region spanning 183 to 328 (TFKEETETDL…KELRKMMPWL (146 aa)) is the KARI C-terminal knotted domain. Residues D191, E195, E227, and E231 each contribute to the Mg(2+) site. Substrate is bound at residue S252.

It belongs to the ketol-acid reductoisomerase family. It depends on Mg(2+) as a cofactor.

The catalysed reaction is (2R)-2,3-dihydroxy-3-methylbutanoate + NADP(+) = (2S)-2-acetolactate + NADPH + H(+). It carries out the reaction (2R,3R)-2,3-dihydroxy-3-methylpentanoate + NADP(+) = (S)-2-ethyl-2-hydroxy-3-oxobutanoate + NADPH + H(+). It participates in amino-acid biosynthesis; L-isoleucine biosynthesis; L-isoleucine from 2-oxobutanoate: step 2/4. Its pathway is amino-acid biosynthesis; L-valine biosynthesis; L-valine from pyruvate: step 2/4. Its function is as follows. Involved in the biosynthesis of branched-chain amino acids (BCAA). Catalyzes an alkyl-migration followed by a ketol-acid reduction of (S)-2-acetolactate (S2AL) to yield (R)-2,3-dihydroxy-isovalerate. In the isomerase reaction, S2AL is rearranged via a Mg-dependent methyl migration to produce 3-hydroxy-3-methyl-2-ketobutyrate (HMKB). In the reductase reaction, this 2-ketoacid undergoes a metal-dependent reduction by NADPH to yield (R)-2,3-dihydroxy-isovalerate. The protein is Ketol-acid reductoisomerase (NADP(+)) of Thermotoga maritima (strain ATCC 43589 / DSM 3109 / JCM 10099 / NBRC 100826 / MSB8).